A 160-amino-acid polypeptide reads, in one-letter code: Large ribosomal subunit protein uL16 (160 aa).

Residues 138–160 form a disordered region; that stretch reads INLSSDSSGEGKTGKDSKEEVKK. Residues 149 to 160 are compositionally biased toward basic and acidic residues; that stretch reads KTGKDSKEEVKK.

This sequence belongs to the universal ribosomal protein uL16 family. As to quaternary structure, part of the 50S ribosomal subunit.

Its function is as follows. Binds 23S rRNA and is also seen to make contacts with the A and possibly P site tRNAs. This is Large ribosomal subunit protein uL16 from Prochlorococcus marinus subsp. pastoris (strain CCMP1986 / NIES-2087 / MED4).